We begin with the raw amino-acid sequence, 374 residues long: MTEPAILVLEDGTVFEGDAVGANGLSVGEVVFNTSLTGYQEVLTDPSYAYQLVTLTYPHIGNTGCTDQDDEANKVWAAGLIVRDVPRRPSNWRSQISLSDWLAARGVVAIAGIDTRKLTRILREKGAQHGALMAGEIDVDRAQDAARQFTGIKGMDLAKVVSTKQAYSWYEGQLDLDRNEWKRAAPQYKVVAYDYGVKLNILRMLAERGCDLTVVPAQTPVDEVLALCPDGVFLSNGPGDPEPCDYAVAAIKTFIMRRVPIFGICLGHQLLAQTVGAKVVKMRHGHHGANHPVQDLRSGRVMITSQNHGFAVDEATLPSNVRVTHRSLFDGTNQGIELLDVPAFSFQGHPEASPGPHDVDVLFDRFITMMAAQS.

The CPSase stretch occupies residues M1–P186. Residues S47, G237, and G239 each contribute to the L-glutamine site. The 186-residue stretch at K189–S374 folds into the Glutamine amidotransferase type-1 domain. C265 serves as the catalytic Nucleophile. 5 residues coordinate L-glutamine: L266, Q269, N307, G309, and F310. Catalysis depends on residues H349 and E351.

This sequence belongs to the CarA family. Composed of two chains; the small (or glutamine) chain promotes the hydrolysis of glutamine to ammonia, which is used by the large (or ammonia) chain to synthesize carbamoyl phosphate. Tetramer of heterodimers (alpha,beta)4.

It carries out the reaction hydrogencarbonate + L-glutamine + 2 ATP + H2O = carbamoyl phosphate + L-glutamate + 2 ADP + phosphate + 2 H(+). The catalysed reaction is L-glutamine + H2O = L-glutamate + NH4(+). The protein operates within amino-acid biosynthesis; L-arginine biosynthesis; carbamoyl phosphate from bicarbonate: step 1/1. It functions in the pathway pyrimidine metabolism; UMP biosynthesis via de novo pathway; (S)-dihydroorotate from bicarbonate: step 1/3. Functionally, small subunit of the glutamine-dependent carbamoyl phosphate synthetase (CPSase). CPSase catalyzes the formation of carbamoyl phosphate from the ammonia moiety of glutamine, carbonate, and phosphate donated by ATP, constituting the first step of 2 biosynthetic pathways, one leading to arginine and/or urea and the other to pyrimidine nucleotides. The small subunit (glutamine amidotransferase) binds and cleaves glutamine to supply the large subunit with the substrate ammonia. The chain is Carbamoyl phosphate synthase small chain from Xylella fastidiosa (strain 9a5c).